The chain runs to 521 residues: UDP-N-acetylmuramoyl-L-alanyl-D-glutamate--2,6-diaminopimelate ligase (521 aa).

UDP-N-acetyl-alpha-D-muramoyl-L-alanyl-D-glutamate is bound at residue S33. Residue 116-122 (GTNGKTT) participates in ATP binding. Residues 158-159 (TT), S185, Q191, and R193 contribute to the UDP-N-acetyl-alpha-D-muramoyl-L-alanyl-D-glutamate site. K225 is subject to N6-carboxylysine. Residues R409, 433–436 (DNPR), G483, and E487 contribute to the meso-2,6-diaminopimelate site. Residues 433-436 (DNPR) carry the Meso-diaminopimelate recognition motif motif.

Belongs to the MurCDEF family. MurE subfamily. Mg(2+) serves as cofactor. Carboxylation is probably crucial for Mg(2+) binding and, consequently, for the gamma-phosphate positioning of ATP.

It is found in the cytoplasm. It carries out the reaction UDP-N-acetyl-alpha-D-muramoyl-L-alanyl-D-glutamate + meso-2,6-diaminopimelate + ATP = UDP-N-acetyl-alpha-D-muramoyl-L-alanyl-gamma-D-glutamyl-meso-2,6-diaminopimelate + ADP + phosphate + H(+). It functions in the pathway cell wall biogenesis; peptidoglycan biosynthesis. Functionally, catalyzes the addition of meso-diaminopimelic acid to the nucleotide precursor UDP-N-acetylmuramoyl-L-alanyl-D-glutamate (UMAG) in the biosynthesis of bacterial cell-wall peptidoglycan. This Nitrosomonas europaea (strain ATCC 19718 / CIP 103999 / KCTC 2705 / NBRC 14298) protein is UDP-N-acetylmuramoyl-L-alanyl-D-glutamate--2,6-diaminopimelate ligase.